Here is a 739-residue protein sequence, read N- to C-terminus: NAD(P)H-quinone oxidoreductase subunit 5, chloroplastic (739 aa).

16 helical membrane passes run 9-29 (WVIP…LILI), 39-59 (IWAF…VQLS), 89-109 (IDPL…LVLI), 125-145 (FVYI…SNLI), 147-167 (IYFF…FWFT), 185-205 (GDFG…SLEF), 219-239 (NGVN…GAVA), 258-278 (TPIS…FLLA), 280-300 (LLPL…VGTI), 327-347 (LGYM…FHLI), 354-374 (ALLF…VGYS), 396-416 (TTFL…CFWS), 425-445 (WLYS…TAFY), 542-562 (LFPL…GISF), 610-630 (TLAI…YSFF), and 719-739 (ISSY…FFLS).

It belongs to the complex I subunit 5 family. As to quaternary structure, NDH is composed of at least 16 different subunits, 5 of which are encoded in the nucleus.

It is found in the plastid. The protein resides in the chloroplast thylakoid membrane. The catalysed reaction is a plastoquinone + NADH + (n+1) H(+)(in) = a plastoquinol + NAD(+) + n H(+)(out). It catalyses the reaction a plastoquinone + NADPH + (n+1) H(+)(in) = a plastoquinol + NADP(+) + n H(+)(out). Its function is as follows. NDH shuttles electrons from NAD(P)H:plastoquinone, via FMN and iron-sulfur (Fe-S) centers, to quinones in the photosynthetic chain and possibly in a chloroplast respiratory chain. The immediate electron acceptor for the enzyme in this species is believed to be plastoquinone. Couples the redox reaction to proton translocation, and thus conserves the redox energy in a proton gradient. The sequence is that of NAD(P)H-quinone oxidoreductase subunit 5, chloroplastic (ndhF) from Triticum aestivum (Wheat).